A 694-amino-acid polypeptide reads, in one-letter code: Elongation factor G (694 aa).

The tr-type G domain occupies 8 to 283 (ERYRNIGIMA…AVIDYLPAPV (276 aa)). Residues 17-24 (AHIDAGKT), 81-85 (DTPGH), and 135-138 (NKMD) contribute to the GTP site.

This sequence belongs to the TRAFAC class translation factor GTPase superfamily. Classic translation factor GTPase family. EF-G/EF-2 subfamily.

It is found in the cytoplasm. Catalyzes the GTP-dependent ribosomal translocation step during translation elongation. During this step, the ribosome changes from the pre-translocational (PRE) to the post-translocational (POST) state as the newly formed A-site-bound peptidyl-tRNA and P-site-bound deacylated tRNA move to the P and E sites, respectively. Catalyzes the coordinated movement of the two tRNA molecules, the mRNA and conformational changes in the ribosome. The sequence is that of Elongation factor G from Paramagnetospirillum magneticum (strain ATCC 700264 / AMB-1) (Magnetospirillum magneticum).